Reading from the N-terminus, the 341-residue chain is Glycerol-1-phosphate dehydrogenase [NAD(P)+] (341 aa).

NAD(+)-binding positions include 81–85 and 103–106; these read GKAID and TTAS. Position 108 (D108) interacts with substrate. S112 provides a ligand contact to NAD(+). D151 provides a ligand contact to substrate. Positions 151 and 232 each coordinate Zn(2+). H236 lines the substrate pocket. A Zn(2+)-binding site is contributed by H253.

The protein belongs to the glycerol-1-phosphate dehydrogenase family. Zn(2+) serves as cofactor.

The protein localises to the cytoplasm. The catalysed reaction is sn-glycerol 1-phosphate + NAD(+) = dihydroxyacetone phosphate + NADH + H(+). It carries out the reaction sn-glycerol 1-phosphate + NADP(+) = dihydroxyacetone phosphate + NADPH + H(+). Its pathway is membrane lipid metabolism; glycerophospholipid metabolism. Its function is as follows. Catalyzes the NAD(P)H-dependent reduction of dihydroxyacetonephosphate (DHAP or glycerone phosphate) to glycerol 1-phosphate (G1P). The G1P thus generated is used as the glycerophosphate backbone of phospholipids in the cellular membranes of Archaea. The chain is Glycerol-1-phosphate dehydrogenase [NAD(P)+] from Methanococcus aeolicus (strain ATCC BAA-1280 / DSM 17508 / OCM 812 / Nankai-3).